The chain runs to 212 residues: Uridine kinase (212 aa).

13 to 20 contributes to the ATP binding site; sequence GASASGKS.

It belongs to the uridine kinase family.

It is found in the cytoplasm. The enzyme catalyses uridine + ATP = UMP + ADP + H(+). The catalysed reaction is cytidine + ATP = CMP + ADP + H(+). The protein operates within pyrimidine metabolism; CTP biosynthesis via salvage pathway; CTP from cytidine: step 1/3. Its pathway is pyrimidine metabolism; UMP biosynthesis via salvage pathway; UMP from uridine: step 1/1. In Psychromonas ingrahamii (strain DSM 17664 / CCUG 51855 / 37), this protein is Uridine kinase.